The primary structure comprises 344 residues: MLEQTDLSLEQLLKNYYETTNEKIVFVNRQGKIIAMNDAAKDILTEEDNYNAMTNAICHRCEGYSNEYDVQSCKDCFLETTQLQHSNFQVFMKTKDNEIKPFTAMYQNIDEQRGISAFTLQNVAPQIERQEKMYQQKMLHRSIQAQENERKRISRELHDSVIQDMLNIDVELRLLKYKHRDKVLAETSQRIEGLLSQLIDDIRNMSVELRPSSLDDLGIEAAFKSYFKQFEENYGMHIKYDSNIKGMRFDNEIETVVYRVVQEGVFNALKYAEVNEIEVSTHSDGKQIVAEVVDRGKGFSLDHHPKGSGLGLYGMRERAELVNGHVNIETHINRGTIITLDIPI.

Cysteine 58, cysteine 61, cysteine 73, and cysteine 76 together coordinate [4Fe-4S] cluster. A Histidine kinase domain is found at 147–344 (ENERKRISRE…GTIITLDIPI (198 aa)). Histidine 158 carries the post-translational modification Phosphohistidine; by autocatalysis.

It depends on [4Fe-4S] cluster as a cofactor. Autophosphorylated.

The protein resides in the cytoplasm. The catalysed reaction is ATP + protein L-histidine = ADP + protein N-phospho-L-histidine.. In terms of biological role, member of the two-component regulatory system NreB/NreC involved in the control of dissimilatory nitrate/nitrite reduction in response to oxygen. NreB functions as a direct oxygen sensor histidine kinase which is autophosphorylated, in the absence of oxygen, probably at the conserved histidine residue, and transfers its phosphate group probably to a conserved aspartate residue of NreC. NreB/NreC activates the expression of the nitrate (narGHJI) and nitrite (nir) reductase operons, as well as the putative nitrate transporter gene narT. The chain is Oxygen sensor histidine kinase NreB (nreB) from Staphylococcus epidermidis (strain ATCC 35984 / DSM 28319 / BCRC 17069 / CCUG 31568 / BM 3577 / RP62A).